We begin with the raw amino-acid sequence, 238 residues long: Gas vesicle protein F (238 aa).

It belongs to the gas vesicle GvpF/GvpL family. Binds GvpA.

The protein resides in the gas vesicle. Its function is as follows. A minor component of the gas vesicle, may be involved in preventing GvpA aggregation during gas vesicle nucleation. Gas vesicles are hollow, gas filled proteinaceous nanostructures found in some microorganisms. It is not clear what function gas vesicles perform in soil bacteria. This Streptomyces sp. (strain CB03234) protein is Gas vesicle protein F.